Here is a 1733-residue protein sequence, read N- to C-terminus: Serine-aspartate repeat-containing protein F (1733 aa).

An N-terminal signal peptide occupies residues 1-45 (MKKRRQGPINKRVDFLSNKVNKYSIRKFTVGTASILVGATLMFGA). The segment at 46-678 (ADNEAKAAED…GSSTAQGDNP (633 aa)) is ligand binding A region. Disordered regions lie at residues 51–269 (KAAE…SVND) and 332–351 (PLAL…ASPR). Basic and acidic residues predominate over residues 61 to 74 (ASKEEQKGSRDNEN). Polar residues-rich tracts occupy residues 85–99 (GSHS…NNAT) and 146–168 (PKTS…DNLN). Residues 175–184 (KESKTDEHST) are compositionally biased toward basic and acidic residues. Polar residues predominate over residues 186–226 (QAQMSTNKSNLDTNDSPTQSEKTSSQANNDSTDNQSAPSKQ). The span at 227–253 (LDSKPSEQKVYKTKFNDEPTQDVEHTT) shows a compositional bias: basic and acidic residues. 2 stretches are compositionally biased toward polar residues: residues 255–266 (KLKTPSVSTDSS) and 336–346 (NRSQSKNSPHK). 4 consecutive CNA-B domains span residues 679–797 (TYSL…YLTP), 798–907 (KYNV…FYKP), 908–1018 (TYNL…YKTP), and 1019–1129 (KYSV…FDDD). The interval 679 to 1129 (TYSLGDYVWL…SIDNGYFDDD (451 aa)) is type I collagen binding region. Residues 862-890 (FETPEGYTPTKQNSGSDEGKDSNGTKTTV) are disordered. The tract at residues 1085 to 1708 (KPEGMTQTTA…ANEDHDSKGT (624 aa)) is disordered. A compositionally biased stretch (basic and acidic residues) spans 1107-1119 (EDVRVTITDHDDF). Residues 1125–1684 (YFDDDSDSDS…DSDSDSDSDS (560 aa)) are compositionally biased toward acidic residues. A compositionally biased stretch (basic and acidic residues) spans 1685-1706 (DSDKNAKDKLPDTGANEDHDSK). Residues 1694–1698 (LPDTG) carry the LPXTG sorting signal motif. Position 1697 is a pentaglycyl murein peptidoglycan amidated threonine (Thr-1697). Residues 1698–1733 (GANEDHDSKGTLLGTLFAGLGALLLGRRRKKDNKEK) constitute a propeptide, removed by sortase.

The protein belongs to the serine-aspartate repeat-containing protein (SDr) family.

The protein resides in the secreted. The protein localises to the cell wall. Binds to type I collagen via alpha-2(I) or alpha-1(I) chains, although its affinity for the alpha-1(I) chain is significantly higher. Involved in bacterial adherence to transcutaneous drivelines from explanted ventricular assist devices. The chain is Serine-aspartate repeat-containing protein F (sdrF) from Staphylococcus epidermidis.